The primary structure comprises 310 residues: Oxygen-dependent coproporphyrinogen-III oxidase (310 aa).

Serine 97 contacts substrate. A divalent metal cation contacts are provided by histidine 101 and histidine 111. Residue histidine 111 is the Proton donor of the active site. 113-115 (NFR) lines the substrate pocket. Residues histidine 150 and histidine 180 each coordinate a divalent metal cation. The interval 245–280 (YVEFNLLYDRGTRFGLEFGGRTESILMSLPPRVVWR) is important for dimerization. 263 to 265 (GGR) contacts substrate.

The protein belongs to the aerobic coproporphyrinogen-III oxidase family. In terms of assembly, homodimer. A divalent metal cation serves as cofactor.

Its subcellular location is the cytoplasm. The enzyme catalyses coproporphyrinogen III + O2 + 2 H(+) = protoporphyrinogen IX + 2 CO2 + 2 H2O. It functions in the pathway porphyrin-containing compound metabolism; protoporphyrin-IX biosynthesis; protoporphyrinogen-IX from coproporphyrinogen-III (O2 route): step 1/1. Its function is as follows. Involved in the heme biosynthesis. Catalyzes the aerobic oxidative decarboxylation of propionate groups of rings A and B of coproporphyrinogen-III to yield the vinyl groups in protoporphyrinogen-IX. In Coxiella burnetii (strain RSA 331 / Henzerling II), this protein is Oxygen-dependent coproporphyrinogen-III oxidase.